The chain runs to 407 residues: Protein ZNF365 (407 aa).

S16 bears the Phosphoserine mark. The segment at 26-51 (FRCPRCGDHTRFRSLSSLRAHLEFSH) adopts a C2H2-type; degenerate zinc-finger fold. Residue S138 is modified to Phosphoserine. A coiled-coil region spans residues 169–296 (VEAVDRTIEK…KQLEYYQSQQ (128 aa)). Residue T175 is modified to Phosphothreonine. The disordered stretch occupies residues 347–392 (LKKAKDDRASMQPAKAIHEQAESSRDLCRPPKKGELLGFGRKGNIR). The segment covering 362 to 381 (AIHEQAESSRDLCRPPKKGE) has biased composition (basic and acidic residues). S369 is subject to Phosphoserine.

As to quaternary structure, homodimers. Interacts with NDE1 and NDEL1. Interacts with DISC1. Interacts with PARP1. Interacts with MCRS1.

The protein resides in the cytoplasm. It is found in the cytoskeleton. The protein localises to the microtubule organizing center. Its subcellular location is the centrosome. Involved in the regulation of neurogenesis. Negatively regulates neurite outgrowth. Involved in the morphogenesis of basket cells in the somatosensory cortex during embryogenesis. Involved in the positive regulation of oligodendrocyte differentiation during postnatal growth. Involved in dendritic arborization, morphogenesis of spine density dendrite, and establishment of postsynaptic dendrite density in cortical pyramidal neurons. Involved in homologous recombination (HR) repair pathway. Required for proper resolution of DNA double-strand breaks (DSBs) by HR. Is required for recovery of stalled replication forks, and directly contributes to genomic stability. Interacts with PARP1 and mediates MRE11-dependent DNA end resection during replication fork recovery. Contributes to genomic stability by preventing telomere dysfunction. This Pongo abelii (Sumatran orangutan) protein is Protein ZNF365 (ZNF365).